We begin with the raw amino-acid sequence, 140 residues long: Large ribosomal subunit protein uL11 (140 aa).

This sequence belongs to the universal ribosomal protein uL11 family. Part of the ribosomal stalk of the 50S ribosomal subunit. Interacts with L10 and the large rRNA to form the base of the stalk. L10 forms an elongated spine to which L12 dimers bind in a sequential fashion forming a multimeric L10(L12)X complex. In terms of processing, one or more lysine residues are methylated.

Functionally, forms part of the ribosomal stalk which helps the ribosome interact with GTP-bound translation factors. This chain is Large ribosomal subunit protein uL11, found in Dehalococcoides mccartyi (strain ATCC BAA-2100 / JCM 16839 / KCTC 5957 / BAV1).